We begin with the raw amino-acid sequence, 414 residues long: Stork-head box protein ham-1 (414 aa).

The interval 1-31 (MTYLAVVLNGPKAKNGRKVFDSFLEQNRQMF) is essential for association with cell cortex. The 78-residue stretch at 93-170 (QQVEQMHFVP…MADHYFVSVP (78 aa)) folds into the Winged helix Storkhead-box1 domain. The interval 282–362 (ECQRKARRRN…SNEEAGSISD (81 aa)) is disordered. The segment at 285–295 (RKARRRNHPRR) is bi-partite nuclear localization signal. The nuclear localization signal stretch occupies residues 321–327 (PTRRRAR). The span at 332-351 (LRSSTPNNSDSAYSISPPHT) shows a compositional bias: polar residues.

The protein localises to the cytoplasm. It is found in the cell cortex. It localises to the nucleus. Functionally, probable transcription factor. Required for asymmetric cell division in neuroblasts, perhaps acting by regulating spindle positioning and myosin polarization, and thus the position of the cleavage plane. Required to produce daughter cell size asymmetry in neuroblasts undergoing asymmetric cell division, usually giving rise to one precursor cell and one apoptotic cell. Positively modulates expression of the serine/threonine kinase pig-1/MELK during asymmetric division of the Q.a neuroblast. Plays a role in neural fate specification in several dopaminergic lineages, including the hermaphrodite-specific neuron (HSN)/phasmid neuron (PHB), acting in concert with the kinase, ham-1, and the T-box protein tbx-2 and the homeobox protein egl-5. The sequence is that of Stork-head box protein ham-1 from Caenorhabditis elegans.